The following is a 500-amino-acid chain: Glycerol kinase (500 aa).

Residue Thr-16 coordinates ADP. ATP-binding residues include Thr-16 and Thr-17. Residue Thr-16 participates in sn-glycerol 3-phosphate binding. Position 20 (Arg-20) interacts with ADP. Arg-86, Glu-87, Tyr-138, and Asp-243 together coordinate sn-glycerol 3-phosphate. Arg-86, Glu-87, Tyr-138, Asp-243, and Gln-244 together coordinate glycerol. ADP contacts are provided by Thr-265 and Gly-313. Positions 265, 313, 317, and 414 each coordinate ATP. Gly-414 and Asn-418 together coordinate ADP.

The protein belongs to the FGGY kinase family.

The enzyme catalyses glycerol + ATP = sn-glycerol 3-phosphate + ADP + H(+). It functions in the pathway polyol metabolism; glycerol degradation via glycerol kinase pathway; sn-glycerol 3-phosphate from glycerol: step 1/1. Inhibited by fructose 1,6-bisphosphate (FBP). Its function is as follows. Key enzyme in the regulation of glycerol uptake and metabolism. Catalyzes the phosphorylation of glycerol to yield sn-glycerol 3-phosphate. In Nostoc sp. (strain PCC 7120 / SAG 25.82 / UTEX 2576), this protein is Glycerol kinase.